The following is a 475-amino-acid chain: Probable phenylalanine--tRNA ligase alpha subunit (475 aa).

The tract at residues 2-151 (TAVAQKIIEN…KRKLVSRRKK (150 aa)) is contains the major tRNA-Phe binding sites. Residues Thr309, 351–353 (QVE), and Tyr391 contribute to the L-phenylalanine site. Residue Glu393 coordinates Mg(2+). An L-phenylalanine-binding site is contributed by Phe417.

The protein belongs to the class-II aminoacyl-tRNA synthetase family. Phe-tRNA synthetase alpha subunit type 2 subfamily. As to quaternary structure, tetramer of two alpha and two beta subunits. Mg(2+) serves as cofactor.

Its subcellular location is the cytoplasm. The catalysed reaction is tRNA(Phe) + L-phenylalanine + ATP = L-phenylalanyl-tRNA(Phe) + AMP + diphosphate + H(+). The polypeptide is Probable phenylalanine--tRNA ligase alpha subunit (Encephalitozoon cuniculi (strain GB-M1) (Microsporidian parasite)).